Here is a 255-residue protein sequence, read N- to C-terminus: MPKAPKKITKPKKAEKKKNPLFQAKPRSFRVGGDIQPKRDLTRFVRWPRYITLQRQKRVLLQRLKVPPQIHQFTKTLDKNQSSNLFKLLASYAPEKPAEKKQRLVAQAEAKKDGKQVETKKPIVLKYGLNHITTLIENKQAKLVVIAHDVDPIELVIFLPQLCRKNDVPFAFVKGKAALGKLVNKKTATAVALTEVRNEDKAKLQQFSELFKTNYNANDELRKTWGGGILGQKSQHKVEALAKAVQEEQIKKAKL.

Positions methionine 1–lysine 16 are enriched in basic residues. Positions methionine 1–serine 28 are disordered.

This sequence belongs to the eukaryotic ribosomal protein eL8 family.

The chain is Large ribosomal subunit protein eL8 (RPL7A) from Tetrahymena thermophila.